Here is a 348-residue protein sequence, read N- to C-terminus: MQSFPPEIWHHIFDHLISFDKFEAKNFGGLLRICRSSYVGGLHAIYYFPKLNPRNYHKFVDTISRKPTRKLVHHISLNNVSYASKASITSRLLRRCATNLETFSGPQSGLGFTALRAFSQCQKLKKIDLSILSEKIDLQYLFGGIQHLKHLEYIILPYLSIPAPMCTECWPSSLTFVGFSGGLTDDFLAESVFPPSLKSINITQCPLLTDAGIFSLLSKIGPNLSSVCVQYPMPELSRSGLDCIFQLCPNATTISIPANYITSTAFESIPESGHNVRSLEITYSGSLLTNISLIKADDLVGALVDGKLPNLHRLQWSIRLGWREESQDVQDLLELIDDQDGEVFITVK.

To yeast YDR306C. Interacts with skp1.

The protein localises to the mitochondrion. The polypeptide is Protein pof5 (pof5) (Schizosaccharomyces pombe (strain 972 / ATCC 24843) (Fission yeast)).